The primary structure comprises 129 residues: Cytochrome c oxidase subunit 5B, mitochondrial (129 aa).

The transit peptide at Met-1–Met-31 directs the protein to the mitochondrion. An N6-acetyllysine mark is found at Lys-68 and Lys-86. Cys-91, Cys-93, Cys-113, and Cys-116 together coordinate Zn(2+). An N6-acetyllysine modification is found at Lys-121.

Belongs to the cytochrome c oxidase subunit 5B family. In terms of assembly, component of the cytochrome c oxidase (complex IV, CIV), a multisubunit enzyme composed of 14 subunits. The complex is composed of a catalytic core of 3 subunits MT-CO1, MT-CO2 and MT-CO3, encoded in the mitochondrial DNA, and 11 supernumerary subunits COX4I1 (or COX4I2), COX5A, COX5B, COX6A1 (or COX6A2), COX6B1 (or COX6B2), COX6C, COX7A2 (or COX7A1), COX7B, COX7C, COX8A and NDUFA4, which are encoded in the nuclear genome. The complex exists as a monomer or a dimer and forms supercomplexes (SCs) in the inner mitochondrial membrane with NADH-ubiquinone oxidoreductase (complex I, CI) and ubiquinol-cytochrome c oxidoreductase (cytochrome b-c1 complex, complex III, CIII), resulting in different assemblies (supercomplex SCI(1)III(2)IV(1) and megacomplex MCI(2)III(2)IV(2)).

The protein resides in the mitochondrion inner membrane. It functions in the pathway energy metabolism; oxidative phosphorylation. Component of the cytochrome c oxidase, the last enzyme in the mitochondrial electron transport chain which drives oxidative phosphorylation. The respiratory chain contains 3 multisubunit complexes succinate dehydrogenase (complex II, CII), ubiquinol-cytochrome c oxidoreductase (cytochrome b-c1 complex, complex III, CIII) and cytochrome c oxidase (complex IV, CIV), that cooperate to transfer electrons derived from NADH and succinate to molecular oxygen, creating an electrochemical gradient over the inner membrane that drives transmembrane transport and the ATP synthase. Cytochrome c oxidase is the component of the respiratory chain that catalyzes the reduction of oxygen to water. Electrons originating from reduced cytochrome c in the intermembrane space (IMS) are transferred via the dinuclear copper A center (CU(A)) of subunit 2 and heme A of subunit 1 to the active site in subunit 1, a binuclear center (BNC) formed by heme A3 and copper B (CU(B)). The BNC reduces molecular oxygen to 2 water molecules using 4 electrons from cytochrome c in the IMS and 4 protons from the mitochondrial matrix. This is Cytochrome c oxidase subunit 5B, mitochondrial (COX5B) from Homo sapiens (Human).